The chain runs to 550 residues: Hydroxylamine reductase (550 aa).

[2Fe-2S] cluster-binding residues include Cys-3, Cys-6, Cys-18, and Cys-25. His-249, Glu-273, Cys-317, Cys-405, Cys-433, Cys-458, Glu-492, and Lys-494 together coordinate hybrid [4Fe-2O-2S] cluster. Cys-405 carries the cysteine persulfide modification.

The protein belongs to the HCP family. [2Fe-2S] cluster is required as a cofactor. It depends on hybrid [4Fe-2O-2S] cluster as a cofactor.

It is found in the cytoplasm. It catalyses the reaction A + NH4(+) + H2O = hydroxylamine + AH2 + H(+). In terms of biological role, catalyzes the reduction of hydroxylamine to form NH(3) and H(2)O. The protein is Hydroxylamine reductase of Pectobacterium atrosepticum (strain SCRI 1043 / ATCC BAA-672) (Erwinia carotovora subsp. atroseptica).